A 523-amino-acid chain; its full sequence is MDNIHNHKILILDFGSQYTQLIARRVREIGVYCELWAWDVTEQQIREFNPTGIILSGGPESTTENDSPRAPEYVFDAGVPVLGVCYGMQTMAMQLGGLTEGSAHREFGYAQVDLQATDSLFAQLNDDLDSAQPKLDVWMSHGDKVTRLPEGFQVTGTTPTCPIAAMSDEKRHFYGVQFHPEVTHTKSGLALLTNFVVNICGCATNWTPENIIEDAVARIKAQVGDDEVILGLSGGVDSSVTALLLHRAIGKNLHCVFVDNGLLRLNEGDQVMEMFGDKFGLNIIRVNAEERFLDALKGIHDPEAKRKMIGKVFVDVFDEESHKQTSVKWLAQGTIYPDVIESAASKTGKAHVIKSHHNVGGLPDYMKLGLVEPLRELFKDEVRKIGLALGLPAEMLNRHPFPGPGLGVRVLGEIKKEYCDLLRKADAIFIEELYNSGWYYKVSQAFTVFLPVKSVGVMGDGRKYDWVVSLRAVETIDFMTAHWAQLPYDLLGKISNRIINEVDGISRVVYDVSGKPPATIEWE.

The Glutamine amidotransferase type-1 domain occupies 8–205 (KILILDFGSQ…VVNICGCATN (198 aa)). C85 serves as the catalytic Nucleophile. Active-site residues include H179 and E181. In terms of domain architecture, GMPS ATP-PPase spans 206–398 (WTPENIIEDA…LGLPAEMLNR (193 aa)). An ATP-binding site is contributed by 233-239 (SGGVDSS).

In terms of assembly, homodimer.

It catalyses the reaction XMP + L-glutamine + ATP + H2O = GMP + L-glutamate + AMP + diphosphate + 2 H(+). It participates in purine metabolism; GMP biosynthesis; GMP from XMP (L-Gln route): step 1/1. Its function is as follows. Catalyzes the synthesis of GMP from XMP. The sequence is that of GMP synthase [glutamine-hydrolyzing] from Actinobacillus succinogenes (strain ATCC 55618 / DSM 22257 / CCUG 43843 / 130Z).